The chain runs to 1520 residues: Integrator complex subunit 3 homolog (1520 aa).

Disordered stretches follow at residues 1-23 (MMNQ…QQLT), 523-671 (QLHS…NSRV), 689-801 (VISQ…SPST), 813-922 (DEPP…QNIK), 1116-1177 (FSNS…NITN), and 1489-1520 (QSSN…FRKE). Low complexity-rich tracts occupy residues 527-549 (QQQQ…QQPP) and 557-595 (QPIN…QQQP). Residues 596–612 (PQQPPPQQQPQQQPPQQ) show a composition bias toward pro residues. Low complexity predominate over residues 613–625 (QPQQQPQQQQPQL). A compositionally biased stretch (polar residues) spans 626–639 (NISTGNLPNIQQPM). 3 stretches are compositionally biased toward low complexity: residues 642–669 (SPPL…TNNS), 694–717 (PQSQ…SPPL), and 725–735 (QQQPSQQLPSQ). A compositionally biased stretch (polar residues) spans 736 to 752 (IVKNSPPNLSMTNENIS). The segment covering 768–789 (SPLINSSNSNITTPNPDSQSQI) has biased composition (low complexity). The segment covering 819–828 (SKSSPTQSNI) has biased composition (polar residues). The segment covering 837-882 (PPQTTISSSSPLLQPQTQPQPQTQPQPQTLQQSTTPSLSSSSTPTI) has biased composition (low complexity). Residues 898–918 (QPPPPPPSSQPLQPPPPPPPS) show a composition bias toward pro residues. 2 stretches are compositionally biased toward low complexity: residues 1116 to 1130 (FSNS…NNNN) and 1137 to 1177 (QQQQ…NITN). A compositionally biased stretch (polar residues) spans 1489-1504 (QSSNIKNDNNPTLSKH).

It belongs to the Integrator subunit 3 family. As to quaternary structure, component of the Integrator complex. The core complex associates with protein phosphatase 2A subunits, to form the Integrator-PP2A (INTAC) complex. Component of the SOSS complex.

It is found in the nucleus. It localises to the cytoplasm. In terms of biological role, component of the integrator complex, a multiprotein complex that terminates RNA polymerase II (Pol II) transcription in the promoter-proximal region of genes. The integrator complex provides a quality checkpoint during transcription elongation by driving premature transcription termination of transcripts that are unfavorably configured for transcriptional elongation: the complex terminates transcription by (1) catalyzing dephosphorylation of the C-terminal domain (CTD) of Pol II subunit polr2a, (2) degrading the exiting nascent RNA transcript via endonuclease activity and (3) promoting the release of Pol II from bound DNA. The integrator complex is also involved in terminating the synthesis of non-coding Pol II transcripts, such as enhancer RNAs (eRNAs), small nuclear RNAs (snRNAs), telomerase RNAs and long non-coding RNAs (lncRNAs). Its function is as follows. Component of the SOSS complex, a multiprotein complex that functions downstream of the MRN complex to promote DNA repair and G2/M checkpoint. The SOSS complex associates with single-stranded DNA at DNA lesions and influences diverse endpoints in the cellular DNA damage response including cell-cycle checkpoint activation, recombinational repair and maintenance of genomic stability. The SOSS complex is required for efficient homologous recombination-dependent repair of double-strand breaks (DSBs) and ATM-dependent signaling pathways. In the SOSS complex, it is required for the assembly of the complex and for stabilization of the complex at DNA damage sites. The sequence is that of Integrator complex subunit 3 homolog (ints3) from Dictyostelium discoideum (Social amoeba).